The primary structure comprises 698 residues: Elongation factor G (698 aa).

In terms of domain architecture, tr-type G spans 8–284 (ANVRNIGIMA…AVVDFLPSPL (277 aa)). Residues 17-24 (AHIDAGKT), 81-85 (DTPGH), and 135-138 (NKLD) contribute to the GTP site. A disordered region spans residues 289–309 (IEGTGTDGETPLQRKPSTSEP).

This sequence belongs to the TRAFAC class translation factor GTPase superfamily. Classic translation factor GTPase family. EF-G/EF-2 subfamily.

It is found in the cytoplasm. Its function is as follows. Catalyzes the GTP-dependent ribosomal translocation step during translation elongation. During this step, the ribosome changes from the pre-translocational (PRE) to the post-translocational (POST) state as the newly formed A-site-bound peptidyl-tRNA and P-site-bound deacylated tRNA move to the P and E sites, respectively. Catalyzes the coordinated movement of the two tRNA molecules, the mRNA and conformational changes in the ribosome. The chain is Elongation factor G from Salinispora arenicola (strain CNS-205).